Reading from the N-terminus, the 556-residue chain is 2-succinyl-5-enolpyruvyl-6-hydroxy-3-cyclohexene-1-carboxylate synthase (556 aa).

This sequence belongs to the TPP enzyme family. MenD subfamily. Homodimer. It depends on Mg(2+) as a cofactor. Mn(2+) is required as a cofactor. Thiamine diphosphate serves as cofactor.

The catalysed reaction is isochorismate + 2-oxoglutarate + H(+) = 5-enolpyruvoyl-6-hydroxy-2-succinyl-cyclohex-3-ene-1-carboxylate + CO2. Its pathway is quinol/quinone metabolism; 1,4-dihydroxy-2-naphthoate biosynthesis; 1,4-dihydroxy-2-naphthoate from chorismate: step 2/7. It participates in quinol/quinone metabolism; menaquinone biosynthesis. In terms of biological role, catalyzes the thiamine diphosphate-dependent decarboxylation of 2-oxoglutarate and the subsequent addition of the resulting succinic semialdehyde-thiamine pyrophosphate anion to isochorismate to yield 2-succinyl-5-enolpyruvyl-6-hydroxy-3-cyclohexene-1-carboxylate (SEPHCHC). This Shigella boydii serotype 4 (strain Sb227) protein is 2-succinyl-5-enolpyruvyl-6-hydroxy-3-cyclohexene-1-carboxylate synthase.